The sequence spans 111 residues: Large ribosomal subunit protein uL22 (111 aa).

Belongs to the universal ribosomal protein uL22 family. As to quaternary structure, part of the 50S ribosomal subunit.

This protein binds specifically to 23S rRNA; its binding is stimulated by other ribosomal proteins, e.g. L4, L17, and L20. It is important during the early stages of 50S assembly. It makes multiple contacts with different domains of the 23S rRNA in the assembled 50S subunit and ribosome. In terms of biological role, the globular domain of the protein is located near the polypeptide exit tunnel on the outside of the subunit, while an extended beta-hairpin is found that lines the wall of the exit tunnel in the center of the 70S ribosome. This chain is Large ribosomal subunit protein uL22, found in Chlamydia pneumoniae (Chlamydophila pneumoniae).